We begin with the raw amino-acid sequence, 75 residues long: Tautomerase PptA (75 aa).

Proline 2 (proton acceptor; via imino nitrogen) is an active-site residue.

This sequence belongs to the 4-oxalocrotonate tautomerase family. PptA subfamily. Homodimer.

The protein resides in the cytoplasm. This Escherichia coli O139:H28 (strain E24377A / ETEC) protein is Tautomerase PptA.